The sequence spans 177 residues: VQ motif-containing protein 11 (177 aa).

Residues 25-34 (FRNIVQKLTG) carry the VQ motif. Residues Ser-43, Ser-99, Ser-115, Ser-142, and Ser-145 each carry the phosphoserine modification. Basic and acidic residues predominate over residues 115–133 (SAREEHHAQPDKEEQKAIA). Positions 115–177 (SAREEHHAQP…RIHEDNHRDS (63 aa)) are disordered. Residues 148-159 (EPAPELLPLFPL) show a composition bias toward low complexity. Position 161 is a phosphoserine (Ser-161). The segment covering 168 to 177 (RIHEDNHRDS) has biased composition (basic and acidic residues).

Post-translationally, phosphorylated on serine residues by MPK6.

Its subcellular location is the nucleus. Functionally, may modulate WRKY transcription factor activities. This is VQ motif-containing protein 11 from Arabidopsis thaliana (Mouse-ear cress).